Reading from the N-terminus, the 95-residue chain is Large ribosomal subunit protein bL31 (95 aa).

Residues 68–95 (AGLNNINKKPEKKKIQGKSEPRKSLNEL) are disordered. Residues 80 to 95 (KKIQGKSEPRKSLNEL) are compositionally biased toward basic and acidic residues.

Belongs to the bacterial ribosomal protein bL31 family. Type A subfamily. Part of the 50S ribosomal subunit.

Its function is as follows. Binds the 23S rRNA. The chain is Large ribosomal subunit protein bL31 from Ureaplasma parvum serovar 3 (strain ATCC 700970).